The sequence spans 217 residues: Zinc finger CCHC-type and RNA-binding motif-containing protein 1 (217 aa).

Residues 10–88 form the RRM domain; it reads STVYVSNLPF…RVIKASIAID (79 aa). The CCHC-type zinc finger occupies 105–122; that stretch reads SKCYECGESGHLSYACPK. Residues 120–217 are disordered; that stretch reads CPKNMLGERE…YFSDEEELSD (98 aa). Residues 145–163 show a composition bias toward acidic residues; it reads PEEEIEEVEESEDEGEDPA. 3 positions are modified to phosphoserine: Ser-155, Ser-210, and Ser-216.

In terms of assembly, component of the U11/U12 snRNPs that are part of the U12-type spliceosome. Interacts with ZRSR1.

Its subcellular location is the nucleus. The protein localises to the nucleoplasm. The chain is Zinc finger CCHC-type and RNA-binding motif-containing protein 1 (ZCRB1) from Bos taurus (Bovine).